A 493-amino-acid chain; its full sequence is WAS/WASL-interacting protein family member 1 (493 aa).

Residues 1 to 14 (MPVPPPPAPPPPPT) are compositionally biased toward pro residues. The disordered stretch occupies residues 1–493 (MPVPPPPAPP…GAPPLPPIPR (493 aa)). The span at 21 to 31 (EKPTLNKTEQA) shows a compositional bias: polar residues. One can recognise a WH2 domain in the interval 32–49 (GRNALLSDISKGKKLKKT). At R33 the chain carries Asymmetric dimethylarginine. Residues 45–48 (KLKK) form a binds actin region. The segment covering 67–105 (ASAGGYGGGGGGGGGGGGGGGGSGGNFGGGGPPGLGGLF) has biased composition (gly residues). R126 and R135 each carry omega-N-methylarginine. Composition is skewed to pro residues over residues 142 to 155 (FSPPSGPGRFPAPS), 162 to 175 (PPEPPRNRMPPPRP), and 183 to 195 (SLPPPVPNTPRPV). Residue S143 is modified to Phosphoserine. S227 carries the post-translational modification Phosphoserine. Composition is skewed to pro residues over residues 239-248 (FPRPPLPPTP), 274-290 (VPPPPSQTSKPPVPSTP), and 298-315 (APPPPPPPSRPGPPPLPP). A phosphoserine mark is found at S330 and S340. A compositionally biased stretch (pro residues) spans 336 to 361 (PPLPSPGRSGPLPPPPSERPPPPVRD). XRSGPXPPXP motif repeat units lie at residues 342–351 (GRSGPLPPPP), 364–373 (GRSGPLPPPP), and 400–409 (PRSGPRPPLP). Positions 403–424 (GPRPPLPPDRPGAGAPPPPPPS) are enriched in pro residues. Positions 425 to 434 (TSVRNGFQDS) are enriched in polar residues. The span at 470–484 (ARNESRSGSNRRERG) shows a compositional bias: basic and acidic residues.

The protein belongs to the verprolin family. In terms of assembly, binds to WAS within the N-terminal region, at a site distinct from the CDC42-binding site. Binds profilin and actin. Binds to WASL. Interacts with DBNL. Interacts with DBNL. Interacts with FNBP1L (via the SH3 domain).

It localises to the cytoplasmic vesicle. Its subcellular location is the cytoplasm. It is found in the cytoskeleton. The protein localises to the cell projection. The protein resides in the ruffle. In terms of biological role, plays a role in the reorganization of the actin cytoskeleton. Contributes with NCK1 and GRB2 in the recruitment and activation of WASL. May participate in regulating the subcellular localization of WASL, resulting in the disassembly of stress fibers in favor of filopodia formation. Plays a role in the formation of cell ruffles. The protein is WAS/WASL-interacting protein family member 1 (Wipf1) of Mus musculus (Mouse).